The following is an 83-amino-acid chain: Small ribosomal subunit protein bS20 (83 aa).

Belongs to the bacterial ribosomal protein bS20 family.

Binds directly to 16S ribosomal RNA. The chain is Small ribosomal subunit protein bS20 from Flavobacterium psychrophilum (strain ATCC 49511 / DSM 21280 / CIP 103535 / JIP02/86).